We begin with the raw amino-acid sequence, 477 residues long: MDLVTRRIRGALGIAGPLLFLEGVPRARLGEVVRIRGEPEAHGRAAEERSGQVIALSRDRIAVQVLEETRGLAPARAEVTLTGQVARLGVSRGMLGRVLDGLGRPADGLPPPVPEARPAIHGAALNVTRREKPSDFIETGVSAIDGMNTLVRGQKLPVFSCAGLPASRLAAQIVCQARVRGGEPFAVVFAAMGSPFREYHAFLDAFRAAGVLDRTVVFLNRAEDPPIERLMTPRCALTCAEHLAFAHGLHVLVVLTDVTSYCEALREVALAREEVPGRRGYPGYMYTDLATIFERAGRVRGRPGSLTQLPVLTMPDDDLTHPIPDLTGYITEGQIVLSRDLDRRGVYPPIDVLPSLSRLMGLGAGPGKTRDDHRPVADQLYAFYARGRDVRRMAAIVGAANLGEEEKRLLAFADAFEDELVGQGGTFRTIEDTLEAGWRLLSGFPPAALTRIPERLLRARPARPAAGAAALSGGAVA.

Belongs to the ATPase alpha/beta chains family.

Its function is as follows. Produces ATP from ADP in the presence of a proton gradient across the membrane. The V-type beta chain is a regulatory subunit. The sequence is that of V-type ATP synthase beta chain from Anaeromyxobacter sp. (strain K).